A 169-amino-acid polypeptide reads, in one-letter code: Photosystem I assembly protein Ycf3 (169 aa).

3 TPR repeats span residues 35–68, 72–105, and 120–153; these read AFTY…ETDP, SYIL…NPSL, and GEQA…APGN.

Belongs to the Ycf3 family.

Its subcellular location is the plastid. The protein localises to the chloroplast thylakoid membrane. Essential for the assembly of the photosystem I (PSI) complex. May act as a chaperone-like factor to guide the assembly of the PSI subunits. This Pinus koraiensis (Korean pine) protein is Photosystem I assembly protein Ycf3.